Here is a 206-residue protein sequence, read N- to C-terminus: MARYLGPKCKLSRREGTDLFLKSGVKANDEKCKMNTAPGQHGARRARLSDYGLQLRERQKVRRMYGILEGQFKKYYVEASRRKGNTGATLLELLESRLDNVVYRMGFAATRAEARQLVVHKGIMVNGHTCNVPSAQVKAGDVVAVREKAKKQLRIQNAVELAKHRKELSWIDVNTDSLEGTMKSSPDRSELSADINEQLIIELYSK.

Residues 96–158 form the S4 RNA-binding domain; sequence SRLDNVVYRM…AKKQLRIQNA (63 aa).

It belongs to the universal ribosomal protein uS4 family. In terms of assembly, part of the 30S ribosomal subunit. Contacts protein S5. The interaction surface between S4 and S5 is involved in control of translational fidelity.

In terms of biological role, one of the primary rRNA binding proteins, it binds directly to 16S rRNA where it nucleates assembly of the body of the 30S subunit. With S5 and S12 plays an important role in translational accuracy. In Francisella tularensis subsp. mediasiatica (strain FSC147), this protein is Small ribosomal subunit protein uS4.